The chain runs to 193 residues: dCTP deaminase, dUMP-forming (193 aa).

Residues 107–112 (RSSLGR), aspartate 125, 133–135 (TLE), glutamine 154, and tyrosine 168 each bind dCTP. Glutamate 135 serves as the catalytic Proton donor/acceptor. Residues 169–193 (AESSGKYHGDERPSPSKMHLDFCRG) are disordered. The segment covering 173 to 193 (GKYHGDERPSPSKMHLDFCRG) has biased composition (basic and acidic residues).

The protein belongs to the dCTP deaminase family. Homotrimer.

The catalysed reaction is dCTP + 2 H2O = dUMP + NH4(+) + diphosphate. Its pathway is pyrimidine metabolism; dUMP biosynthesis; dUMP from dCTP: step 1/1. In terms of biological role, bifunctional enzyme that catalyzes both the deamination of dCTP to dUTP and the hydrolysis of dUTP to dUMP without releasing the toxic dUTP intermediate. This is dCTP deaminase, dUMP-forming from Methanopyrus kandleri (strain AV19 / DSM 6324 / JCM 9639 / NBRC 100938).